The primary structure comprises 313 residues: MARTEDDSWEITESVGATALGVASARAAETRSQHPLISDPFAQVFLDAVGDGVWNWHSAPQLPAELLEIEPDLPLQMEAMVSYMASRTAFFDEFFLDATRAGIGQAVILAAGLDSRAWRLPWPAGTTVFELDQPRVLEFKAATLAEHGAEPACGRVAVAVDLRQDWPTALRQAGFDPSVPSVWSAEGLMPYLPAVAQDLLFERVQGLTVRASRIAVEALGPKFLDPQVRANRSARMERIRAVMAHVEPQREIPRTDELWYFEEREDVGDWFRRHDWDVTVTPSGELMAGYGRAAAAQVEDRVPTNLFVAAQRK.

Residues Asp-132 and 161 to 162 (DL) each bind S-adenosyl-L-methionine.

The protein belongs to the UPF0677 family.

Functionally, exhibits S-adenosyl-L-methionine-dependent methyltransferase activity. This Mycobacterium marinum (strain ATCC BAA-535 / M) protein is Putative S-adenosyl-L-methionine-dependent methyltransferase MMAR_0955.